The chain runs to 569 residues: Cysteine--tRNA ligase CPS1 homolog, chloroplastic/mitochondrial (569 aa).

The N-terminal 42 residues, M1–Y42, are a transit peptide targeting the chloroplast and mitochondrion. C99 contributes to the Zn(2+) binding site. A 'HIGH' region motif is present at residues V101 to H111. The Zn(2+) site is built by C279, H304, and E308. Positions K336–S340 match the 'KMSKS' region motif. An ATP-binding site is contributed by K339.

This sequence belongs to the class-I aminoacyl-tRNA synthetase family. It depends on Zn(2+) as a cofactor.

It localises to the plastid. The protein localises to the chloroplast. It is found in the mitochondrion. It catalyses the reaction tRNA(Cys) + L-cysteine + ATP = L-cysteinyl-tRNA(Cys) + AMP + diphosphate. In terms of biological role, nuclear genome-encoded factor required for normal assembly of chloroplast polysomes. The sequence is that of Cysteine--tRNA ligase CPS1 homolog, chloroplastic/mitochondrial from Oryza sativa subsp. japonica (Rice).